The primary structure comprises 533 residues: uncharacterized protein (533 aa).

This is an uncharacterized protein from Clostridium beijerinckii (strain ATCC 51743 / NCIMB 8052) (Clostridium acetobutylicum).